The primary structure comprises 194 residues: Oligoribonuclease (194 aa).

The region spanning 11-174 is the Exonuclease domain; the sequence is LIWIDLEMTG…SDVRDSIDEL (164 aa). Residue Y132 is part of the active site.

It belongs to the oligoribonuclease family.

The protein resides in the cytoplasm. 3'-to-5' exoribonuclease specific for small oligoribonucleotides. The protein is Oligoribonuclease of Xanthomonas campestris pv. campestris (strain ATCC 33913 / DSM 3586 / NCPPB 528 / LMG 568 / P 25).